The following is a 1068-amino-acid chain: Retinoblastoma-like protein 1 (1068 aa).

Threonine 332 carries the phosphothreonine; by CDK2 modification. Position 369 is a phosphothreonine; by CDK4 (threonine 369). Threonine 385 is subject to Phosphothreonine; by CDK2. Residues 385–584 form a domain A region; that stretch reads TPVASATQSV…WEALQVSANK (200 aa). The interval 385–949 is pocket; binds T and E1A; the sequence is TPVASATQSV…GRVKSFALKY (565 aa). Positions 585-780 are spacer; it reads VPTCEEVIFP…AQEVHSTGIN (196 aa). Serine 640 is subject to Phosphoserine; by CDK2 and CDK4. Phosphoserine occurs at positions 650 and 749. Serine 762 is subject to Phosphoserine; by CDK2. The segment at 781–949 is domain B; that stretch reads RPKRTGSLAL…GRVKSFALKY (169 aa). A phosphoserine; by CDK2 and CDK4 mark is found at serine 964 and serine 975. At serine 988 the chain carries Phosphoserine; by CDK2. Threonine 997 is subject to Phosphothreonine; by CDK2. At serine 1009 the chain carries Phosphoserine; by CDK2. Serine 1041 carries the phosphoserine modification.

It belongs to the retinoblastoma protein (RB) family. Component of the DREAM complex (also named LINC complex) at least composed of E2F4, E2F5, LIN9, LIN37, LIN52, LIN54, MYBL1, MYBL2, RBL1, RBL2, RBBP4, TFDP1 and TFDP2. The complex exists in quiescent cells where it represses cell cycle-dependent genes. It dissociates in S phase when LIN9, LIN37, LIN52 and LIN54 form a subcomplex that binds to MYBL2. Interacts with AATF. Interacts with KDM5A. Interacts with KMT5B and KMT5C. Interacts with USP4. Interacts with RBBP9. In terms of assembly, (Microbial infection) Interacts with SV40 and JC virus large T antigens. Large T antigen, but not E1A, binds only to the unphosphorylated form. As to quaternary structure, (Microbial infection) Interacts with JC virus small t antigen. Post-translationally, cell-cycle arrest properties are inactivated by phosphorylation on Thr-332, Ser-640, Ser-964 and Ser-975 by CDK4.

The protein resides in the nucleus. In terms of biological role, key regulator of entry into cell division. Directly involved in heterochromatin formation by maintaining overall chromatin structure and, in particular, that of constitutive heterochromatin by stabilizing histone methylation. Recruits and targets histone methyltransferases KMT5B and KMT5C, leading to epigenetic transcriptional repression. Controls histone H4 'Lys-20' trimethylation. Probably acts as a transcription repressor by recruiting chromatin-modifying enzymes to promoters. Potent inhibitor of E2F-mediated trans-activation. May act as a tumor suppressor. The protein is Retinoblastoma-like protein 1 (RBL1) of Homo sapiens (Human).